The chain runs to 59 residues: Large ribosomal subunit protein uL30 (59 aa).

It belongs to the universal ribosomal protein uL30 family. As to quaternary structure, part of the 50S ribosomal subunit.

In Geobacter sulfurreducens (strain ATCC 51573 / DSM 12127 / PCA), this protein is Large ribosomal subunit protein uL30.